A 147-amino-acid polypeptide reads, in one-letter code: Hemoglobin subunit beta-2 (147 aa).

Residue Val-2 is modified to N-acetylvaline. Positions His-3–His-147 constitute a Globin domain. N6-succinyllysine is present on Lys-18. At Tyr-42 the chain carries Phosphotyrosine. A phosphoserine mark is found at Ser-45, Ser-51, and Ser-53. N6-succinyllysine is present on Lys-60. Heme b is bound by residues His-64 and His-93. The residue at position 105 (Arg-105) is an Asymmetric dimethylarginine. Residue Thr-124 is modified to Phosphothreonine.

Belongs to the globin family. In terms of assembly, heterotetramer of two alpha chains and two beta chains. As to expression, red blood cells.

Its function is as follows. Involved in oxygen transport from the lung to the various peripheral tissues. This chain is Hemoglobin subunit beta-2 (Hbb-b2), found in Mus musculus (Mouse).